A 329-amino-acid chain; its full sequence is Malate dehydrogenase (329 aa).

Residue 12–18 (GAAGQIG) coordinates NAD(+). Arg-95 and Arg-101 together coordinate substrate. NAD(+) contacts are provided by residues Asn-108, Gln-115, and 132–134 (VGN). Asn-134 and Arg-165 together coordinate substrate. The Proton acceptor role is filled by His-190.

It belongs to the LDH/MDH superfamily. MDH type 2 family.

The catalysed reaction is (S)-malate + NAD(+) = oxaloacetate + NADH + H(+). Its function is as follows. Catalyzes the reversible oxidation of malate to oxaloacetate. The polypeptide is Malate dehydrogenase (Ralstonia nicotianae (strain ATCC BAA-1114 / GMI1000) (Ralstonia solanacearum)).